Reading from the N-terminus, the 696-residue chain is Glutamate-rich protein 6B (696 aa).

Over residues 1–10 (MSAENNQLSG) the composition is skewed to polar residues. The segment at 1–105 (MSAENNQLSG…EYLEKAGYLE (105 aa)) is disordered. Acidic residues-rich tracts occupy residues 32 to 44 (EDTEVELDEESLQ) and 54 to 72 (ESLEDKEYLEEEEDLEEEE). Residues 73-91 (YLGKEEYLKEEEYLGKEEH) show a composition bias toward basic and acidic residues.

It belongs to the ERICH6 family.

In Homo sapiens (Human), this protein is Glutamate-rich protein 6B (ERICH6B).